Reading from the N-terminus, the 456-residue chain is Trigger factor (456 aa).

The PPIase FKBP-type domain occupies 192–277 (GDTVVIDFVG…IHEVKTKEVP (86 aa)).

The protein belongs to the FKBP-type PPIase family. Tig subfamily.

The protein resides in the cytoplasm. It catalyses the reaction [protein]-peptidylproline (omega=180) = [protein]-peptidylproline (omega=0). Its function is as follows. Involved in protein export. Acts as a chaperone by maintaining the newly synthesized protein in an open conformation. Functions as a peptidyl-prolyl cis-trans isomerase. The polypeptide is Trigger factor (Streptococcus pyogenes serotype M2 (strain MGAS10270)).